The chain runs to 194 residues: CASP-like protein 2D1 (194 aa).

Residues 1–16 (MRDNNNNNTREEERSS) are compositionally biased toward basic and acidic residues. A disordered region spans residues 1-26 (MRDNNNNNTREEERSSSSKQQQPQAP). Topologically, residues 1 to 30 (MRDNNNNNTREEERSSSSKQQQPQAPMSLK) are cytoplasmic. Residues 31–51 (IIDSCLRLSVVPLSVATIWLT) traverse the membrane as a helical segment. The Extracellular portion of the chain corresponds to 52-74 (VTNHESNPDYGNLEYNSIMGLKY). A helical membrane pass occupies residues 75–95 (MVGVSAISAIYALLSTVSSWV). The Cytoplasmic portion of the chain corresponds to 96–110 (TCLVSKAWLFFIPDQ). The helical transmembrane segment at 111 to 133 (VLAYVMTTSVAGATEIVYLLNKG) threads the bilayer. The Extracellular segment spans residues 134–152 (DKIVTWSEMCSSYPHYCSK). Residues 153 to 173 (LTIALGLHVFVLFFFLFLSVI) form a helical membrane-spanning segment. Residues 174–194 (SAYRAFSPFDPPCDSQTNNDA) are Cytoplasmic-facing.

Belongs to the Casparian strip membrane proteins (CASP) family. As to quaternary structure, homodimer and heterodimers.

The protein localises to the cell membrane. The protein is CASP-like protein 2D1 of Arabidopsis thaliana (Mouse-ear cress).